The following is a 251-amino-acid chain: N-acetylmuramoyl-L-alanine amidase CwlA (251 aa).

An N-terminal signal peptide occupies residues Met1 to Ala37. Positions Ile38–His140 constitute an N-acetylmuramoyl-L-alanine amidase domain.

The protein belongs to the N-acetylmuramoyl-L-alanine amidase 2 family.

Its subcellular location is the secreted. The enzyme catalyses Hydrolyzes the link between N-acetylmuramoyl residues and L-amino acid residues in certain cell-wall glycopeptides.. Functionally, autolysins are involved in some important biological processes such as cell separation, cell-wall turnover, competence for genetic transformation, formation of the flagella and sporulation. The chain is N-acetylmuramoyl-L-alanine amidase CwlA (cwlA) from Bacillus sp.